We begin with the raw amino-acid sequence, 418 residues long: Probable cysteine desulfurase 2 (418 aa).

N6-(pyridoxal phosphate)lysine is present on lysine 234. Cysteine 374 (cysteine persulfide intermediate) is an active-site residue.

Belongs to the class-V pyridoxal-phosphate-dependent aminotransferase family. Csd subfamily. Requires pyridoxal 5'-phosphate as cofactor.

It catalyses the reaction (sulfur carrier)-H + L-cysteine = (sulfur carrier)-SH + L-alanine. In terms of biological role, catalyzes the removal of elemental sulfur and selenium atoms from L-cysteine, L-cystine, L-selenocysteine, and L-selenocystine to produce L-alanine. In Mycobacterium leprae (strain TN), this protein is Probable cysteine desulfurase 2 (csd2).